A 197-amino-acid chain; its full sequence is Holliday junction branch migration complex subunit RuvA (197 aa).

The domain I stretch occupies residues 1 to 64 (MIASVRGVVQ…EDMLALFGFS (64 aa)). Positions 65–143 (SPAQRALFEL…VATISPQLST (79 aa)) are domain II. Residues 144–153 (NPGLLALNTE) form a flexible linker region. The interval 153-197 (ELIDILTSLGYSTTEAQAALNALPADAPADTEERLRLALQYFGGV) is domain III.

This sequence belongs to the RuvA family. In terms of assembly, homotetramer. Forms an RuvA(8)-RuvB(12)-Holliday junction (HJ) complex. HJ DNA is sandwiched between 2 RuvA tetramers; dsDNA enters through RuvA and exits via RuvB. An RuvB hexamer assembles on each DNA strand where it exits the tetramer. Each RuvB hexamer is contacted by two RuvA subunits (via domain III) on 2 adjacent RuvB subunits; this complex drives branch migration. In the full resolvosome a probable DNA-RuvA(4)-RuvB(12)-RuvC(2) complex forms which resolves the HJ.

Its subcellular location is the cytoplasm. Its function is as follows. The RuvA-RuvB-RuvC complex processes Holliday junction (HJ) DNA during genetic recombination and DNA repair, while the RuvA-RuvB complex plays an important role in the rescue of blocked DNA replication forks via replication fork reversal (RFR). RuvA specifically binds to HJ cruciform DNA, conferring on it an open structure. The RuvB hexamer acts as an ATP-dependent pump, pulling dsDNA into and through the RuvAB complex. HJ branch migration allows RuvC to scan DNA until it finds its consensus sequence, where it cleaves and resolves the cruciform DNA. In Herpetosiphon aurantiacus (strain ATCC 23779 / DSM 785 / 114-95), this protein is Holliday junction branch migration complex subunit RuvA.